Reading from the N-terminus, the 284-residue chain is Tryptophan synthase alpha chain (284 aa).

Residues glutamate 59 and aspartate 70 each act as proton acceptor in the active site.

This sequence belongs to the TrpA family. Tetramer of two alpha and two beta chains.

The catalysed reaction is (1S,2R)-1-C-(indol-3-yl)glycerol 3-phosphate + L-serine = D-glyceraldehyde 3-phosphate + L-tryptophan + H2O. It participates in amino-acid biosynthesis; L-tryptophan biosynthesis; L-tryptophan from chorismate: step 5/5. In terms of biological role, the alpha subunit is responsible for the aldol cleavage of indoleglycerol phosphate to indole and glyceraldehyde 3-phosphate. The polypeptide is Tryptophan synthase alpha chain (Azospirillum brasilense).